The chain runs to 78 residues: Beta-defensin 105A (78 aa).

An N-terminal signal peptide occupies residues 1–27 (MALIRKTFYFLFAVFFILVQLPSGCQA). Intrachain disulfides connect Cys43–Cys74, Cys53–Cys67, and Cys57–Cys73.

The protein belongs to the beta-defensin family.

It is found in the secreted. In terms of biological role, has antimicrobial activity. The chain is Beta-defensin 105A (DEFB105A) from Gorilla gorilla gorilla (Western lowland gorilla).